A 335-amino-acid chain; its full sequence is Phosphate acyltransferase (335 aa).

It belongs to the PlsX family. In terms of assembly, homodimer. Probably interacts with PlsY.

The protein resides in the cytoplasm. The catalysed reaction is a fatty acyl-[ACP] + phosphate = an acyl phosphate + holo-[ACP]. The protein operates within lipid metabolism; phospholipid metabolism. Catalyzes the reversible formation of acyl-phosphate (acyl-PO(4)) from acyl-[acyl-carrier-protein] (acyl-ACP). This enzyme utilizes acyl-ACP as fatty acyl donor, but not acyl-CoA. This chain is Phosphate acyltransferase, found in Streptococcus pyogenes serotype M1.